A 191-amino-acid chain; its full sequence is Fe/S biogenesis protein NfuA (191 aa).

Cys-149 and Cys-152 together coordinate [4Fe-4S] cluster.

This sequence belongs to the NfuA family. Homodimer. [4Fe-4S] cluster serves as cofactor.

Involved in iron-sulfur cluster biogenesis. Binds a 4Fe-4S cluster, can transfer this cluster to apoproteins, and thereby intervenes in the maturation of Fe/S proteins. Could also act as a scaffold/chaperone for damaged Fe/S proteins. In Cronobacter sakazakii (strain ATCC BAA-894) (Enterobacter sakazakii), this protein is Fe/S biogenesis protein NfuA.